A 540-amino-acid chain; its full sequence is Probable tubulin polyglutamylase TTLL2 (540 aa).

The 344-residue stretch at 41 to 384 (LKPLVFRVDE…NGLRSEEKKC (344 aa)) folds into the TTL domain. Residues lysine 169, 175 to 176 (RG), 197 to 200 (QKYI), and 210 to 212 (KCD) contribute to the ATP site. Arginine 175 lines the a protein pocket. L-glutamate is bound at residue arginine 236. 255 to 256 (TN) is an ATP binding site. Positions 258 and 278 each coordinate L-glutamate. Mg(2+)-binding residues include aspartate 330, glutamate 343, and asparagine 345. Lysine 361 lines the L-glutamate pocket. The interval 479-499 (SQSQPHKMKGPAGDLPEAGST) is disordered.

It belongs to the tubulin--tyrosine ligase family. The cofactor is Mg(2+). As to expression, highly expressed in brain, kidney, liver and testis. Expressed in heart, lung, muscle and spleen.

Its function is as follows. Probable tubulin polyglutamylase that generates side chains of glutamate on the gamma-carboxyl group of specific glutamate residues within the C-terminal tail of target proteins. Similar to TTLL1, may acquire enzymatic activity only in complex with other proteins as it is most likely lacking domains important for autonomous activity. Probably involved in the side-chain initiation step of the polyglutamylation reaction rather than the elongation step. The protein is Probable tubulin polyglutamylase TTLL2 of Mus musculus (Mouse).